The sequence spans 453 residues: Mogroside IIIx synthase (453 aa).

His-21 (proton acceptor) is an active-site residue. Asp-122 (charge relay) is an active-site residue. Ser-273, Gln-336, Trp-354, Asn-355, Ser-356, Glu-359, Asp-375, and Gln-376 together coordinate UDP-alpha-D-glucose.

The protein belongs to the UDP-glycosyltransferase family. As to expression, highly expressed in mature fruits.

It carries out the reaction mogroside IIE + UDP-alpha-D-glucose = mogroside IIIX + UDP + H(+). The enzyme catalyses mogroside III + UDP-alpha-D-glucose = mogroside IV + UDP + H(+). It catalyses the reaction mogroside III + UDP-alpha-D-glucose = siamenoside I + UDP + H(+). The catalysed reaction is mogroside IV + UDP-alpha-D-glucose = mogroside V + UDP + H(+). It functions in the pathway secondary metabolite biosynthesis; terpenoid biosynthesis. UDP-glycosyltransferase involved in the biosynthesis of cucurbitacin and mogroside tetracyclic triterpene natural products (e.g. siamenoside I and mogrosides IV, V and VI). Cucurbitacins have cytotoxic properties and exhibit deterrent taste as a defense barrier against herbivores. Mogrosides are nonsugar highly oxygenated compounds used as high-intensity zero-calorie sweeteners; they also possess pharmacological properties such as regulating immunity, lowering blood sugar and lipid levels, protecting the liver, and acting as antioxidants and antitumor agents. Catalyzes the branched glucosylations of mogroside II-E, mogroside III and mogroside IV. The chain is Mogroside IIIx synthase from Siraitia grosvenorii (Monk's fruit).